Reading from the N-terminus, the 199-residue chain is Imidazole glycerol phosphate synthase subunit HisH (199 aa).

The region spanning Arg2–Lys199 is the Glutamine amidotransferase type-1 domain. The active-site Nucleophile is Cys76. Catalysis depends on residues His178 and Glu180.

As to quaternary structure, heterodimer of HisH and HisF.

It is found in the cytoplasm. The enzyme catalyses 5-[(5-phospho-1-deoxy-D-ribulos-1-ylimino)methylamino]-1-(5-phospho-beta-D-ribosyl)imidazole-4-carboxamide + L-glutamine = D-erythro-1-(imidazol-4-yl)glycerol 3-phosphate + 5-amino-1-(5-phospho-beta-D-ribosyl)imidazole-4-carboxamide + L-glutamate + H(+). The catalysed reaction is L-glutamine + H2O = L-glutamate + NH4(+). It functions in the pathway amino-acid biosynthesis; L-histidine biosynthesis; L-histidine from 5-phospho-alpha-D-ribose 1-diphosphate: step 5/9. In terms of biological role, IGPS catalyzes the conversion of PRFAR and glutamine to IGP, AICAR and glutamate. The HisH subunit catalyzes the hydrolysis of glutamine to glutamate and ammonia as part of the synthesis of IGP and AICAR. The resulting ammonia molecule is channeled to the active site of HisF. This Sulfolobus acidocaldarius (strain ATCC 33909 / DSM 639 / JCM 8929 / NBRC 15157 / NCIMB 11770) protein is Imidazole glycerol phosphate synthase subunit HisH.